An 88-amino-acid polypeptide reads, in one-letter code: Small ribosomal subunit protein bS16c (88 aa).

This sequence belongs to the bacterial ribosomal protein bS16 family.

It localises to the plastid. It is found in the chloroplast. The polypeptide is Small ribosomal subunit protein bS16c (Oenothera elata subsp. hookeri (Hooker's evening primrose)).